The following is a 436-amino-acid chain: MIKSIKGFNDILQVETATSRPSSEWRQLEAMLKQALDQFGYEEIRLPIVEETQLFARAIGDATDIVEKEMFSFTDKSDPPTPITLRPEGTAGAVRAVIEHNLLRGDSPKLWYMGPMFRYEQPQKGRYRQFHQLGVEAFGSEHVDVEAELIAMTYLMWQRLGIDHELSLEINSLGELDERKAYRSALVEFLQTKKEQLDEDSQRRLTTNPLRILDSKDPNTQALLMEAPRLADFLGEDSQAHFEQLKTYLTALGIEYVVNPNLVRGLDYYNKTVFEWVTDKLGSQATVCAGGRYDGLIGQLKSIGKSEDKAKAVKSEPAVGFAMGLERLLLLVQAVNPIQAQPACDVFVVVHPDLYQQGLLYAQSLRQARSDLRVKMASASSLKAQMKKADKSGAQLTVILAQDEVESGTISVKTMHTGEQVSQDKLWLHSAENFRL.

This sequence belongs to the class-II aminoacyl-tRNA synthetase family. As to quaternary structure, homodimer.

Its subcellular location is the cytoplasm. The enzyme catalyses tRNA(His) + L-histidine + ATP = L-histidyl-tRNA(His) + AMP + diphosphate + H(+). This chain is Histidine--tRNA ligase, found in Psychrobacter sp. (strain PRwf-1).